We begin with the raw amino-acid sequence, 89 residues long: Small ribosomal subunit protein uS15 (89 aa).

This sequence belongs to the universal ribosomal protein uS15 family. As to quaternary structure, part of the 30S ribosomal subunit. Forms a bridge to the 50S subunit in the 70S ribosome, contacting the 23S rRNA.

Functionally, one of the primary rRNA binding proteins, it binds directly to 16S rRNA where it helps nucleate assembly of the platform of the 30S subunit by binding and bridging several RNA helices of the 16S rRNA. In terms of biological role, forms an intersubunit bridge (bridge B4) with the 23S rRNA of the 50S subunit in the ribosome. The polypeptide is Small ribosomal subunit protein uS15 (Pseudoalteromonas atlantica (strain T6c / ATCC BAA-1087)).